We begin with the raw amino-acid sequence, 1029 residues long: Myosin phosphatase Rho-interacting protein (1029 aa).

The tract at residues 1–387 (MSAAKENPCR…DRRSTESSMT (387 aa)) is interaction with F-actin. Residues 43–150 (KPIYGGWLLL…WLEMLMVYPR (108 aa)) form the PH 1 domain. The tract at residues 152-267 (NKQNQKKKRK…GDRVDGGRKV (116 aa)) is disordered. Residues 179–195 (SSSGGSSGSSSSSSSSS) are compositionally biased toward low complexity. S198, S224, S226, S230, and S232 each carry phosphoserine. The segment covering 226 to 237 (SPVQSPSQSQPP) has biased composition (low complexity). A compositionally biased stretch (basic and acidic residues) spans 245–267 (TGLDSKEDENILSGDRVDGGRKV). S271, S275, S294, and S297 each carry phosphoserine. Disordered stretches follow at residues 279–306 (AKQD…SRRS) and 333–383 (PSSD…RSTE). Residue T300 is modified to Phosphothreonine. Residues 338–354 (RQGRSERRAIPRKRDFA) are compositionally biased toward basic and acidic residues. S369 is modified (phosphoserine). The region spanning 391-487 (LNFKKGWLTK…WIQTIMKHVL (97 aa)) is the PH 2 domain. A disordered region spans residues 490 to 614 (SAPDVTSSLP…NDGPGMEDTA (125 aa)). Polar residues predominate over residues 492–509 (PDVTSSLPEGKNKSTSFD). S497 is subject to Phosphoserine. Over residues 527 to 550 (PEQKKSRARERRREGRSKTFDWAE) the composition is skewed to basic and acidic residues. The interaction with RHOA stretch occupies residues 550 to 828 (EFRPIQQALA…SVQRELEVLS (279 aa)). Residues 562–571 (RASTVGSSDS) are compositionally biased toward polar residues. A compositionally biased stretch (basic and acidic residues) spans 583-592 (ELERERARRR). S622 is subject to Phosphoserine. The residue at position 650 (T650) is a Phosphothreonine. Residues 675–979 (STHELTSLLE…LKAATEALGE (305 aa)) are a coiled coil. S804 carries the post-translational modification Phosphoserine. The interval 828–883 (SEQYSQKCLENAHLAQALEAERQALRQCQRENQELNAHNQELNNRLAAEITRLRTL) is interaction with PPP1R12A. Phosphoserine occurs at positions 981, 997, 1018, and 1020.

As to quaternary structure, binds RHOA, PPP1R12A/MBS and PPP1R12C/MBS85 through adjacent coiled coil domains. Interacts with MYZAP. Binds F-actin through its N-terminus.

It is found in the cytoplasm. The protein resides in the cytoskeleton. Its function is as follows. Targets myosin phosphatase to the actin cytoskeleton. Required for the regulation of the actin cytoskeleton by RhoA and ROCK1. Depletion leads to an increased number of stress fibers in smooth muscle cells through stabilization of actin fibers by phosphorylated myosin. Overexpression of MRIP as well as its F-actin-binding region leads to disassembly of stress fibers in neuronal cells. This is Myosin phosphatase Rho-interacting protein (Mprip) from Rattus norvegicus (Rat).